Consider the following 189-residue polypeptide: Crossover junction endodeoxyribonuclease RuvC (189 aa).

Catalysis depends on residues aspartate 7, glutamate 68, and aspartate 141. Mg(2+) contacts are provided by aspartate 7, glutamate 68, and aspartate 141.

This sequence belongs to the RuvC family. Homodimer which binds Holliday junction (HJ) DNA. The HJ becomes 2-fold symmetrical on binding to RuvC with unstacked arms; it has a different conformation from HJ DNA in complex with RuvA. In the full resolvosome a probable DNA-RuvA(4)-RuvB(12)-RuvC(2) complex forms which resolves the HJ. Mg(2+) serves as cofactor.

Its subcellular location is the cytoplasm. It carries out the reaction Endonucleolytic cleavage at a junction such as a reciprocal single-stranded crossover between two homologous DNA duplexes (Holliday junction).. The RuvA-RuvB-RuvC complex processes Holliday junction (HJ) DNA during genetic recombination and DNA repair. Endonuclease that resolves HJ intermediates. Cleaves cruciform DNA by making single-stranded nicks across the HJ at symmetrical positions within the homologous arms, yielding a 5'-phosphate and a 3'-hydroxyl group; requires a central core of homology in the junction. The consensus cleavage sequence is 5'-(A/T)TT(C/G)-3'. Cleavage occurs on the 3'-side of the TT dinucleotide at the point of strand exchange. HJ branch migration catalyzed by RuvA-RuvB allows RuvC to scan DNA until it finds its consensus sequence, where it cleaves and resolves the cruciform DNA. This chain is Crossover junction endodeoxyribonuclease RuvC, found in Nocardia farcinica (strain IFM 10152).